The chain runs to 29 residues: Glucagon (29 aa).

Residue Ser2 is modified to Phosphoserine.

This sequence belongs to the glucagon family.

It is found in the secreted. Functionally, glucagon plays a key role in glucose metabolism and homeostasis. Regulates blood glucose by increasing gluconeogenesis and decreasing glycolysis. This is Glucagon (GCG) from Chinchilla chinchilla (Short-tailed chinchilla).